The primary structure comprises 253 residues: Imidazole glycerol phosphate synthase subunit HisF (253 aa).

Active-site residues include Asp-11 and Asp-130.

Belongs to the HisA/HisF family. As to quaternary structure, heterodimer of HisH and HisF.

It localises to the cytoplasm. It catalyses the reaction 5-[(5-phospho-1-deoxy-D-ribulos-1-ylimino)methylamino]-1-(5-phospho-beta-D-ribosyl)imidazole-4-carboxamide + L-glutamine = D-erythro-1-(imidazol-4-yl)glycerol 3-phosphate + 5-amino-1-(5-phospho-beta-D-ribosyl)imidazole-4-carboxamide + L-glutamate + H(+). Its pathway is amino-acid biosynthesis; L-histidine biosynthesis; L-histidine from 5-phospho-alpha-D-ribose 1-diphosphate: step 5/9. IGPS catalyzes the conversion of PRFAR and glutamine to IGP, AICAR and glutamate. The HisF subunit catalyzes the cyclization activity that produces IGP and AICAR from PRFAR using the ammonia provided by the HisH subunit. This chain is Imidazole glycerol phosphate synthase subunit HisF, found in Clostridium botulinum (strain Langeland / NCTC 10281 / Type F).